A 517-amino-acid chain; its full sequence is 2,3-bisphosphoglycerate-independent phosphoglycerate mutase (517 aa).

Mn(2+) is bound by residues Asp14 and Ser64. The Phosphoserine intermediate role is filled by Ser64. Substrate-binding positions include His125, 155-156, Arg187, Arg193, 263-266, and Lys337; these read RD and RSDR. Residues Asp404, His408, Asp445, His446, and His464 each contribute to the Mn(2+) site.

It belongs to the BPG-independent phosphoglycerate mutase family. As to quaternary structure, monomer. Requires Mn(2+) as cofactor.

It carries out the reaction (2R)-2-phosphoglycerate = (2R)-3-phosphoglycerate. Its pathway is carbohydrate degradation; glycolysis; pyruvate from D-glyceraldehyde 3-phosphate: step 3/5. Catalyzes the interconversion of 2-phosphoglycerate and 3-phosphoglycerate. The protein is 2,3-bisphosphoglycerate-independent phosphoglycerate mutase of Nitrosococcus oceani (strain ATCC 19707 / BCRC 17464 / JCM 30415 / NCIMB 11848 / C-107).